The chain runs to 894 residues: Phosphoenolpyruvate carboxylase (894 aa).

Residues histidine 143 and lysine 556 contribute to the active site.

It belongs to the PEPCase type 1 family. The cofactor is Mg(2+).

The catalysed reaction is oxaloacetate + phosphate = phosphoenolpyruvate + hydrogencarbonate. Forms oxaloacetate, a four-carbon dicarboxylic acid source for the tricarboxylic acid cycle. The sequence is that of Phosphoenolpyruvate carboxylase from Acinetobacter baumannii (strain ATCC 17978 / DSM 105126 / CIP 53.77 / LMG 1025 / NCDC KC755 / 5377).